The sequence spans 611 residues: Aspartate--tRNA ligase, mitochondrial (611 aa).

The N-terminal 30 residues, 1 to 30 (MVLSRLPACLLPLVGTKVSIQGWLVATSRQ), are a transit peptide targeting the mitochondrion. Glu192 contributes to the L-aspartate binding site. Residues 216-219 (QQYK) are aspartate. Arg238 contacts L-aspartate. ATP is bound by residues 238 to 240 (RDE) and Glu502. L-aspartate is bound at residue Arg509. 554–557 (GFDR) lines the ATP pocket.

It belongs to the class-II aminoacyl-tRNA synthetase family. Type 1 subfamily.

Its subcellular location is the mitochondrion. It catalyses the reaction tRNA(Asp) + L-aspartate + ATP = L-aspartyl-tRNA(Asp) + AMP + diphosphate. The chain is Aspartate--tRNA ligase, mitochondrial (msd1) from Schizosaccharomyces pombe (strain 972 / ATCC 24843) (Fission yeast).